A 232-amino-acid chain; its full sequence is RNA chaperone ProQ (232 aa).

The interval E105–D182 is disordered. The span at Q117 to R136 shows a compositional bias: basic and acidic residues. The segment covering R137 to P146 has biased composition (basic residues). The span at R147 to H177 shows a compositional bias: basic and acidic residues.

Belongs to the ProQ family.

The protein resides in the cytoplasm. Its function is as follows. RNA chaperone with significant RNA binding, RNA strand exchange and RNA duplexing activities. May regulate ProP activity through an RNA-based, post-transcriptional mechanism. This is RNA chaperone ProQ from Escherichia coli (strain ATCC 8739 / DSM 1576 / NBRC 3972 / NCIMB 8545 / WDCM 00012 / Crooks).